The sequence spans 1000 residues: C2 domain-containing protein 5 (1000 aa).

A C2 domain is found at 1–109 (MPGKLKVKIV…EAATVISGWF (109 aa)). 6 residues coordinate Ca(2+): Asp-19, Asp-26, Asp-76, Asp-78, Ser-81, and Asp-84. Residue Ser-197 is modified to Phosphoserine; by PKB/AKT2. Ser-200 and Ser-260 each carry phosphoserine. Residues 265–330 (MKEIPFNEDP…SGSAGKEGGP (66 aa)) form a disordered region. The span at 274–289 (PNPNTHSSGPSTPLKN) shows a compositional bias: polar residues. A compositionally biased stretch (low complexity) spans 290–318 (QTYSFSPSKSYSRQSSSSDTDLSLTPKTG). Residues Ser-293, Ser-295, Ser-304, Ser-305, and Ser-306 each carry the phosphoserine modification. Thr-317 is subject to Phosphothreonine. Residues 319-328 (MGSGSAGKEG) show a composition bias toward gly residues. Ser-323 is modified (phosphoserine). Residue Thr-601 is modified to Phosphothreonine. The interval 639–669 (EIIGSPIPEPRQRSRLLRSQSESSDEVTELD) is disordered. Ser-643, Ser-657, Ser-659, Ser-661, and Ser-662 each carry phosphoserine. At Thr-666 the chain carries Phosphothreonine. A Phosphoserine modification is found at Ser-671. Position 807 is a phosphothreonine (Thr-807). Phosphoserine occurs at positions 817 and 852.

Ca(2+) serves as cofactor. Phosphorylated on Ser-197 by active myristoylated kinase AKT2; insulin-stimulated phosphorylation by AKT2 regulates SLC2A4/GLUT4 translocation into the plasma membrane.

The protein localises to the cytoplasmic vesicle membrane. It localises to the cytoplasm. Its subcellular location is the cell cortex. It is found in the cell membrane. The protein resides in the cell projection. The protein localises to the ruffle. Required for insulin-stimulated glucose transport and glucose transporter SLC2A4/GLUT4 translocation from intracellular glucose storage vesicle (GSV) to the plasma membrane (PM) in adipocytes. Binds phospholipid membranes in a calcium-dependent manner and is necessary for the optimal membrane fusion between SLC2A4/GLUT4 GSV and the PM. This is C2 domain-containing protein 5 (C2CD5) from Pongo abelii (Sumatran orangutan).